The following is a 418-amino-acid chain: MLEHLRATDPIIADLIEREAQRQRQGLELIASENYTSLAVMEAQGSVLTNKYAEGLPGRRYYGGCEFVDAIEQLAIDRACQLFGTSHANVQPHSGAQANIAVFTALLQPGDTILGMRLDHGGHLTHGSPVNFSGKWYNVHFYGVDPQTGQIDYDDLAAKARAIRPKLITSGASAYPRLIDFARMRQIADEVGALLMADIAHIAGLVATGEHPSPVGHAHIITTTTHKTLRGPRGGLILMGEEFAKQINSSVFPGTQGGPLMHVIAGKAVAFGEALRPEFKQYAAQIRRNAKALAEGLHAQGLTLVSGGTDNHLMLVDLRSTGLTGAQAQRALDKAAITVNKNAIPDDPQPPMKTSGIRIGTPAVTTRGMREREMAQIAAWIGEVLMYPDDEVRLARIAAEVAEMCRHFPVPADMVQVR.

(6S)-5,6,7,8-tetrahydrofolate contacts are provided by residues L118 and 122–124 (GHL). N6-(pyridoxal phosphate)lysine is present on K227. A (6S)-5,6,7,8-tetrahydrofolate-binding site is contributed by E242.

It belongs to the SHMT family. In terms of assembly, homodimer. The cofactor is pyridoxal 5'-phosphate.

The protein localises to the cytoplasm. It carries out the reaction (6R)-5,10-methylene-5,6,7,8-tetrahydrofolate + glycine + H2O = (6S)-5,6,7,8-tetrahydrofolate + L-serine. It functions in the pathway one-carbon metabolism; tetrahydrofolate interconversion. It participates in amino-acid biosynthesis; glycine biosynthesis; glycine from L-serine: step 1/1. In terms of biological role, catalyzes the reversible interconversion of serine and glycine with tetrahydrofolate (THF) serving as the one-carbon carrier. This reaction serves as the major source of one-carbon groups required for the biosynthesis of purines, thymidylate, methionine, and other important biomolecules. Also exhibits THF-independent aldolase activity toward beta-hydroxyamino acids, producing glycine and aldehydes, via a retro-aldol mechanism. The chain is Serine hydroxymethyltransferase from Chloroflexus aggregans (strain MD-66 / DSM 9485).